The primary structure comprises 103 residues: MKYDGDGRATARFFSDKGCRRAPLFTAPADAARHKRCLWSVSRVRRARDGRFYRSRLVSVTVYASPSPFSDERPSSRFRGITLLSKRRRLRYSTVGLTRYRKR.

This is an uncharacterized protein from Shigella flexneri.